A 296-amino-acid polypeptide reads, in one-letter code: 4-diphosphocytidyl-2-C-methyl-D-erythritol kinase (296 aa).

Residue Lys-18 is part of the active site. Position 103–113 (Pro-103–Ser-113) interacts with ATP. Asp-146 is an active-site residue.

Belongs to the GHMP kinase family. IspE subfamily.

It carries out the reaction 4-CDP-2-C-methyl-D-erythritol + ATP = 4-CDP-2-C-methyl-D-erythritol 2-phosphate + ADP + H(+). It participates in isoprenoid biosynthesis; isopentenyl diphosphate biosynthesis via DXP pathway; isopentenyl diphosphate from 1-deoxy-D-xylulose 5-phosphate: step 3/6. Catalyzes the phosphorylation of the position 2 hydroxy group of 4-diphosphocytidyl-2C-methyl-D-erythritol. The chain is 4-diphosphocytidyl-2-C-methyl-D-erythritol kinase from Solidesulfovibrio magneticus (strain ATCC 700980 / DSM 13731 / RS-1) (Desulfovibrio magneticus).